The chain runs to 363 residues: Cytochrome b (363 aa).

4 helical membrane passes run 23–43, 67–89, 102–122, and 164–184; these read FGFI…MLSF, WFVR…LHIM, SWYS…VGYV, and FFSI…FHLY. Positions 73 and 87 each coordinate heme b. Heme b contacts are provided by His168 and His182. A ubiquinone is bound at residue His187. 4 helical membrane passes run 210–230, 271–291, 310–330, and 332–352; these read VLFS…VQSG, VFPT…LLVL, VWTT…SIGK, and VVHV…VLFI.

The protein belongs to the cytochrome b family. As to quaternary structure, the main subunits of complex b-c1 are: cytochrome b, cytochrome c1 and the Rieske protein. It depends on heme b as a cofactor.

The protein resides in the mitochondrion inner membrane. Component of the ubiquinol-cytochrome c reductase complex (complex III or cytochrome b-c1 complex) that is part of the mitochondrial respiratory chain. The b-c1 complex mediates electron transfer from ubiquinol to cytochrome c. Contributes to the generation of a proton gradient across the mitochondrial membrane that is then used for ATP synthesis. The protein is Cytochrome b (MT-CYB) of Theileria annulata.